Reading from the N-terminus, the 354-residue chain is DNA integrity scanning protein DisA (354 aa).

The 139-residue stretch at 6–144 (DDELKKILKI…GDIKYVLRDS (139 aa)) folds into the DAC domain. Residues glycine 73, leucine 91, and 104 to 108 (TRHRT) contribute to the ATP site.

It belongs to the DisA family. As to quaternary structure, homooctamer. Mg(2+) is required as a cofactor.

The enzyme catalyses 2 ATP = 3',3'-c-di-AMP + 2 diphosphate. Its function is as follows. Participates in a DNA-damage check-point that is active prior to asymmetric division when DNA is damaged. DisA forms globular foci that rapidly scan along the chromosomes during sporulation, searching for lesions. When a lesion is present, DisA pauses at the lesion site. This triggers a cellular response that culminates in a temporary block in sporulation initiation. Also has diadenylate cyclase activity, catalyzing the condensation of 2 ATP molecules into cyclic di-AMP (c-di-AMP). c-di-AMP acts as a signaling molecule that couples DNA integrity with progression of sporulation. The rise in c-di-AMP level generated by DisA while scanning the chromosome, operates as a positive signal that advances sporulation; upon encountering a lesion, the DisA focus arrests at the damaged site and halts c-di-AMP synthesis. This Clostridium perfringens (strain SM101 / Type A) protein is DNA integrity scanning protein DisA.